A 1025-amino-acid chain; its full sequence is Retrovirus-related Pol polyprotein from type-1 retrotransposable element R2 (1025 aa).

The segment covering 1-11 (NQIKKSNTSTG) has biased composition (polar residues). A disordered region spans residues 1–38 (NQIKKSNTSTGARIPKAMTNPADNFAGGQWKPPGRRSA). A C2H2-type zinc finger spans residues 46-69 (FVCEHCLRAFTTNTGRGLHIKRAH). Basic and acidic residues predominate over residues 146-158 (NRARETELTRLET). Residues 146-172 (NRARETELTRLETADEDPASQEQDNPN) form a disordered region. In terms of domain architecture, Reverse transcriptase spans 358 to 635 (MIMYHGQCPR…DQWKYLGVVY (278 aa)). The segment at 755–1025 (SLLGGDWVAE…YRTERRRTAN (271 aa)) is nucleic acid-binding endonuclease.

The enzyme catalyses DNA(n) + a 2'-deoxyribonucleoside 5'-triphosphate = DNA(n+1) + diphosphate. The polypeptide is Retrovirus-related Pol polyprotein from type-1 retrotransposable element R2 (Nasonia vitripennis (Parasitic wasp)).